The sequence spans 135 residues: ATP synthase epsilon chain (135 aa).

Belongs to the ATPase epsilon chain family. F-type ATPases have 2 components, CF(1) - the catalytic core - and CF(0) - the membrane proton channel. CF(1) has five subunits: alpha(3), beta(3), gamma(1), delta(1), epsilon(1). CF(0) has three main subunits: a, b and c.

Its subcellular location is the cell inner membrane. Produces ATP from ADP in the presence of a proton gradient across the membrane. The chain is ATP synthase epsilon chain from Rhizobium johnstonii (strain DSM 114642 / LMG 32736 / 3841) (Rhizobium leguminosarum bv. viciae).